A 99-amino-acid chain; its full sequence is MALTLTDVKRIAHLARLELPDADAEHTLIQLNDFFGLVEQMQAVDTTGISPLAHPIEQIEDVALRLRNDAVTENVNRDDYQRSAPAVQDGLYLVPKVIE.

It belongs to the GatC family. In terms of assembly, heterotrimer of A, B and C subunits.

The catalysed reaction is L-glutamyl-tRNA(Gln) + L-glutamine + ATP + H2O = L-glutaminyl-tRNA(Gln) + L-glutamate + ADP + phosphate + H(+). It catalyses the reaction L-aspartyl-tRNA(Asn) + L-glutamine + ATP + H2O = L-asparaginyl-tRNA(Asn) + L-glutamate + ADP + phosphate + 2 H(+). Allows the formation of correctly charged Asn-tRNA(Asn) or Gln-tRNA(Gln) through the transamidation of misacylated Asp-tRNA(Asn) or Glu-tRNA(Gln) in organisms which lack either or both of asparaginyl-tRNA or glutaminyl-tRNA synthetases. The reaction takes place in the presence of glutamine and ATP through an activated phospho-Asp-tRNA(Asn) or phospho-Glu-tRNA(Gln). This is Aspartyl/glutamyl-tRNA(Asn/Gln) amidotransferase subunit C from Paraburkholderia phymatum (strain DSM 17167 / CIP 108236 / LMG 21445 / STM815) (Burkholderia phymatum).